The primary structure comprises 378 residues: Succinate--CoA ligase [GDP-forming] subunit beta (378 aa).

An ATP-grasp domain is found at 9–235 (KEILARYGVP…VEAEHPLEVE (227 aa)). GTP is bound by residues Lys-45, 52-54 (GRG), Val-94, and Glu-99. Positions 190 and 204 each coordinate Mg(2+). Substrate is bound by residues Asn-255 and 312–314 (GIT).

The protein belongs to the succinate/malate CoA ligase beta subunit family. In terms of assembly, heterotetramer of two alpha and two beta subunits. It depends on Mg(2+) as a cofactor.

The enzyme catalyses GTP + succinate + CoA = succinyl-CoA + GDP + phosphate. It catalyses the reaction succinate + ATP + CoA = succinyl-CoA + ADP + phosphate. Its pathway is carbohydrate metabolism; tricarboxylic acid cycle; succinate from succinyl-CoA (ligase route): step 1/1. Functionally, succinyl-CoA synthetase functions in the citric acid cycle (TCA), coupling the hydrolysis of succinyl-CoA to the synthesis of either ATP or GTP and thus represents the only step of substrate-level phosphorylation in the TCA. The beta subunit provides nucleotide specificity of the enzyme and binds the substrate succinate, while the binding sites for coenzyme A and phosphate are found in the alpha subunit. Can use either ATP or GTP, but prefers GTP. This is Succinate--CoA ligase [GDP-forming] subunit beta from Thermus thermophilus.